Reading from the N-terminus, the 86-residue chain is Mitochondrial import inner membrane translocase subunit Tim10 (86 aa).

The Twin CX3C motif motif lies at 29–54 (CQAKCIATAFKESELTKGEAVCLDRC). Disulfide bonds link C29–C54 and C33–C50.

Belongs to the small Tim family. As to quaternary structure, heterohexamer; composed of 3 copies of tim-9/tin-9.1 and 3 copies of tim-10/tin-10, named soluble 70 kDa complex. The complex associates with the tim-22 component of the TIM22 complex. Interacts with multi-pass transmembrane proteins in transit.

It is found in the mitochondrion inner membrane. Its function is as follows. Mitochondrial intermembrane chaperone that participates in the import and insertion of multi-pass transmembrane proteins into the mitochondrial inner membrane. May also be required for the transfer of beta-barrel precursors from the TOM complex to the sorting and assembly machinery (SAM complex) of the outer membrane. Acts as a chaperone-like protein that protects the hydrophobic precursors from aggregation and guide them through the mitochondrial intermembrane space. The chain is Mitochondrial import inner membrane translocase subunit Tim10 (tin-10) from Caenorhabditis briggsae.